A 331-amino-acid chain; its full sequence is Glycerol-3-phosphate dehydrogenase [NAD(P)+] (331 aa).

Positions 11, 12, 32, and 106 each coordinate NADPH. Positions 106, 134, and 136 each coordinate sn-glycerol 3-phosphate. A138 serves as a coordination point for NADPH. Residues K189, D242, S252, R253, and N254 each coordinate sn-glycerol 3-phosphate. Catalysis depends on K189, which acts as the Proton acceptor. R253 serves as a coordination point for NADPH. NADPH contacts are provided by V277 and E279.

This sequence belongs to the NAD-dependent glycerol-3-phosphate dehydrogenase family.

It is found in the cytoplasm. It carries out the reaction sn-glycerol 3-phosphate + NAD(+) = dihydroxyacetone phosphate + NADH + H(+). The catalysed reaction is sn-glycerol 3-phosphate + NADP(+) = dihydroxyacetone phosphate + NADPH + H(+). It functions in the pathway membrane lipid metabolism; glycerophospholipid metabolism. In terms of biological role, catalyzes the reduction of the glycolytic intermediate dihydroxyacetone phosphate (DHAP) to sn-glycerol 3-phosphate (G3P), the key precursor for phospholipid synthesis. In Clostridium perfringens (strain SM101 / Type A), this protein is Glycerol-3-phosphate dehydrogenase [NAD(P)+].